Reading from the N-terminus, the 196-residue chain is Mpv17-like protein (196 aa).

The Cytoplasmic portion of the chain corresponds to 1–16 (MAGWWPALSRAARRHP). The segment at 16–55 (PWPTNVLLYGSLVSAGDALQQRLQGREANWRQTRRVATLV) is targeting to peroxisomes. A helical transmembrane segment spans residues 17-34 (WPTNVLLYGSLVSAGDAL). Topologically, residues 35-50 (QQRLQGREANWRQTRR) are lumenal. A helical transmembrane segment spans residues 51-67 (VATLVVTFHANFNYVWL). At 68–90 (RLLERALPGRAPHALLAKLLCDQ) the chain is on the cytoplasmic side. A helical transmembrane segment spans residues 91–108 (VVGAPIAVSAFYVGMSIL). Residues 109 to 150 (QGKDDIFLDLKQKFWNTYLSGLMYWPFVQLTNFSLVPVQWRT) are Lumenal-facing. A helical membrane pass occupies residues 151-167 (AYAGVCGFLWATFICFS). The Cytoplasmic segment spans residues 168 to 196 (QQSGDGTFKSAFTILYTKGTSATEGYPKK).

This sequence belongs to the peroxisomal membrane protein PXMP2/4 family. In terms of tissue distribution, isoform 1 is detected in the kidney (at protein level). Isoform 1 and isoform 2 are expressed in the kidney, heart, liver, lung, pancreas and skeletal muscle.

The protein localises to the peroxisome membrane. In terms of biological role, participates in reactive oxygen species metabolism by up- or down-regulation of the genes of antioxidant enzymes. Protective against the mitochondrial apoptotic cascade. The protein is Mpv17-like protein (MPV17L) of Homo sapiens (Human).